Reading from the N-terminus, the 261-residue chain is Cytochrome c oxidase subunit 3 (261 aa).

The Mitochondrial matrix portion of the chain corresponds to 1 to 15; that stretch reads MTHQTHAYHMVNPSP. Residues 16–34 form a helical membrane-spanning segment; that stretch reads WPLTGALSALLMSSGLTMW. Over 35–40 the chain is Mitochondrial intermembrane; it reads FHFNSL. The helical transmembrane segment at 41–66 threads the bilayer; it reads ILLTTGLVTNILTMYQWWRDVIREST. Residues 67-72 lie on the Mitochondrial matrix side of the membrane; it reads FQGHHT. The chain crosses the membrane as a helical span at residues 73-105; that stretch reads PVVQKGLRYGMVLFIISEVLFFTGFFWAFYHSS. The Mitochondrial intermembrane segment spans residues 106 to 128; sequence LAPTPELGGCWPPTGINPLNPLE. The helical transmembrane segment at 129 to 152 threads the bilayer; that stretch reads VPLLNTSVLLASGVSITWAHHSLM. The Mitochondrial matrix segment spans residues 153 to 155; that stretch reads EGN. A helical transmembrane segment spans residues 156 to 183; that stretch reads RKQMLQALFITIALGVYFTLLQASEYHE. The Mitochondrial intermembrane segment spans residues 184 to 190; that stretch reads ASFTISD. Residues 191 to 223 form a helical membrane-spanning segment; the sequence is GVYGSTFFVATGFHGLHVIIGSTFLIVCFLRQL. Residues 224–232 are Mitochondrial matrix-facing; the sequence is KFHFTSDHH. The chain crosses the membrane as a helical span at residues 233–256; it reads FGFEAAAWYWHFVDVVWLFLYVSI. Residues 257 to 261 lie on the Mitochondrial intermembrane side of the membrane; the sequence is YWWGS.

Belongs to the cytochrome c oxidase subunit 3 family. In terms of assembly, component of the cytochrome c oxidase (complex IV, CIV), a multisubunit enzyme composed of 14 subunits. The complex is composed of a catalytic core of 3 subunits MT-CO1, MT-CO2 and MT-CO3, encoded in the mitochondrial DNA, and 11 supernumerary subunits COX4I, COX5A, COX5B, COX6A, COX6B, COX6C, COX7A, COX7B, COX7C, COX8 and NDUFA4, which are encoded in the nuclear genome. The complex exists as a monomer or a dimer and forms supercomplexes (SCs) in the inner mitochondrial membrane with NADH-ubiquinone oxidoreductase (complex I, CI) and ubiquinol-cytochrome c oxidoreductase (cytochrome b-c1 complex, complex III, CIII), resulting in different assemblies (supercomplex SCI(1)III(2)IV(1) and megacomplex MCI(2)III(2)IV(2)).

It is found in the mitochondrion inner membrane. The enzyme catalyses 4 Fe(II)-[cytochrome c] + O2 + 8 H(+)(in) = 4 Fe(III)-[cytochrome c] + 2 H2O + 4 H(+)(out). Functionally, component of the cytochrome c oxidase, the last enzyme in the mitochondrial electron transport chain which drives oxidative phosphorylation. The respiratory chain contains 3 multisubunit complexes succinate dehydrogenase (complex II, CII), ubiquinol-cytochrome c oxidoreductase (cytochrome b-c1 complex, complex III, CIII) and cytochrome c oxidase (complex IV, CIV), that cooperate to transfer electrons derived from NADH and succinate to molecular oxygen, creating an electrochemical gradient over the inner membrane that drives transmembrane transport and the ATP synthase. Cytochrome c oxidase is the component of the respiratory chain that catalyzes the reduction of oxygen to water. Electrons originating from reduced cytochrome c in the intermembrane space (IMS) are transferred via the dinuclear copper A center (CU(A)) of subunit 2 and heme A of subunit 1 to the active site in subunit 1, a binuclear center (BNC) formed by heme A3 and copper B (CU(B)). The BNC reduces molecular oxygen to 2 water molecules using 4 electrons from cytochrome c in the IMS and 4 protons from the mitochondrial matrix. The polypeptide is Cytochrome c oxidase subunit 3 (MT-CO3) (Hippopotamus amphibius (Hippopotamus)).